The chain runs to 252 residues: Low-density lipoprotein receptor-related protein 5-like protein (252 aa).

LDL-receptor class B repeat units follow at residues 3–45 (GHVY…NWVA), 46–88 (RSLY…HPEM), 89–132 (GLTY…DLQE), 133–175 (GKLY…LGDF), and 176–218 (IYWT…DKVV). A disordered region spans residues 223–247 (HADRNGGAATCASSRPTQPGLAAPS).

In Homo sapiens (Human), this protein is Low-density lipoprotein receptor-related protein 5-like protein (LRP5L).